The sequence spans 828 residues: Translation initiation factor IF-2 (828 aa).

2 disordered regions span residues 48-76 (SYSG…SEEF) and 112-148 (ASQE…ESTL). A compositionally biased stretch (polar residues) spans 49 to 58 (YSGSTTTLSL). Positions 65-74 (LETGSSSGSE) are enriched in low complexity. The span at 116–126 (DPIEVEQEESS) shows a compositional bias: acidic residues. The span at 127-144 (DTNKVKEEPKIEEVKDIE) shows a compositional bias: basic and acidic residues. The tr-type G domain maps to 326-496 (SRAPVVTVMG…LLIAEMQNLK (171 aa)). The segment at 335–342 (GHVDHGKT) is G1. 335 to 342 (GHVDHGKT) contributes to the GTP binding site. Residues 360 to 364 (GITQH) are G2. The interval 382–385 (DTPG) is G3. GTP is bound by residues 382–386 (DTPGH) and 436–439 (NKID). The tract at residues 436–439 (NKID) is G4. The segment at 472–474 (SAL) is G5.

It belongs to the TRAFAC class translation factor GTPase superfamily. Classic translation factor GTPase family. IF-2 subfamily.

It is found in the cytoplasm. In terms of biological role, one of the essential components for the initiation of protein synthesis. Protects formylmethionyl-tRNA from spontaneous hydrolysis and promotes its binding to the 30S ribosomal subunits. Also involved in the hydrolysis of GTP during the formation of the 70S ribosomal complex. In Rickettsia bellii (strain OSU 85-389), this protein is Translation initiation factor IF-2.